The primary structure comprises 376 residues: UDP-N-acetylglucosamine--N-acetylmuramyl-(pentapeptide) pyrophosphoryl-undecaprenol N-acetylglucosamine transferase (376 aa).

UDP-N-acetyl-alpha-D-glucosamine contacts are provided by residues 14–16, Asn-128, Arg-169, Ser-201, Ile-256, and Gln-301; that span reads TGG.

It belongs to the glycosyltransferase 28 family. MurG subfamily.

The protein localises to the cell inner membrane. It catalyses the reaction di-trans,octa-cis-undecaprenyl diphospho-N-acetyl-alpha-D-muramoyl-L-alanyl-D-glutamyl-meso-2,6-diaminopimeloyl-D-alanyl-D-alanine + UDP-N-acetyl-alpha-D-glucosamine = di-trans,octa-cis-undecaprenyl diphospho-[N-acetyl-alpha-D-glucosaminyl-(1-&gt;4)]-N-acetyl-alpha-D-muramoyl-L-alanyl-D-glutamyl-meso-2,6-diaminopimeloyl-D-alanyl-D-alanine + UDP + H(+). It participates in cell wall biogenesis; peptidoglycan biosynthesis. In terms of biological role, cell wall formation. Catalyzes the transfer of a GlcNAc subunit on undecaprenyl-pyrophosphoryl-MurNAc-pentapeptide (lipid intermediate I) to form undecaprenyl-pyrophosphoryl-MurNAc-(pentapeptide)GlcNAc (lipid intermediate II). The sequence is that of UDP-N-acetylglucosamine--N-acetylmuramyl-(pentapeptide) pyrophosphoryl-undecaprenol N-acetylglucosamine transferase from Phocaeicola vulgatus (strain ATCC 8482 / DSM 1447 / JCM 5826 / CCUG 4940 / NBRC 14291 / NCTC 11154) (Bacteroides vulgatus).